We begin with the raw amino-acid sequence, 141 residues long: LOB domain-containing protein 34 (141 aa).

The LOB domain occupies 16–119; it reads NQCAACRHQR…SPLNYVAPVI (104 aa).

Belongs to the LOB domain-containing protein family.

This is LOB domain-containing protein 34 (LBD34) from Arabidopsis thaliana (Mouse-ear cress).